A 382-amino-acid chain; its full sequence is Alcohol dehydrogenase 4 (382 aa).

Residues aspartate 40, asparagine 72, glycine 99, serine 100, threonine 139, threonine 140, threonine 148, phenylalanine 150, lysine 161, and glycine 183 each contribute to the NAD(+) site. Residues aspartate 195, histidine 199, and histidine 264 each contribute to the Fe(2+) site. NAD(+) contacts are provided by histidine 268 and histidine 278. Histidine 278 is a Fe(2+) binding site.

The protein belongs to the iron-containing alcohol dehydrogenase family. In terms of assembly, homodimer. Zn(2+) is required as a cofactor. The cofactor is Fe(2+).

The protein localises to the mitochondrion. It catalyses the reaction a primary alcohol + NAD(+) = an aldehyde + NADH + H(+). The enzyme catalyses ethanol + NAD(+) = acetaldehyde + NADH + H(+). Its activity is regulated as follows. Inhibited by EDTA. In terms of biological role, alcohol dehydrogenase specific for ethanol. Acts mainyl as a mitochondrial formaldehyde dehydrogenase and has no effect on ethanol production. Shows drastically reduced activity towards primary alcohols from 4 carbon atoms upward. Isomers of aliphatic alcohol, as well as secondary alcohols and glycerol are not used at all. The role of ADH4 in yeast metabolism is not yet known, but ADH4 is not responsible for the production of ethanol during growth on glucose nor responsible for the oxidation of ethanol to acetaldehyde. This is Alcohol dehydrogenase 4 from Saccharomyces cerevisiae (strain ATCC 204508 / S288c) (Baker's yeast).